Consider the following 56-residue polypeptide: Conotoxin reg3.9 (56 aa).

The signal sequence occupies residues Leu1–Leu8. Residues Leu1 to Arg22 form a disordered region. Positions Pro9 to Gly40 are excised as a propeptide. 3 cysteine pairs are disulfide-bonded: Cys41–Cys55, Cys42–Cys53, and Cys47–Cys56.

It belongs to the conotoxin M superfamily. Expressed by the venom duct.

The protein localises to the secreted. This is Conotoxin reg3.9 from Conus regius (Crown cone).